Consider the following 407-residue polypeptide: UDP-N-acetyl-D-mannosamine dehydrogenase (407 aa).

Belongs to the UDP-glucose/GDP-mannose dehydrogenase family.

It carries out the reaction UDP-N-acetyl-alpha-D-mannosamine + 2 NAD(+) + H2O = UDP-N-acetyl-alpha-D-mannosaminouronate + 2 NADH + 3 H(+). It participates in capsule biogenesis; capsule polysaccharide biosynthesis. Its function is as follows. Dehydrogenase involved in the biosynthesis of capsular polysaccharides. Catalyzes the NAD(+)-dependent oxidation of UDP-N-acetyl-D-mannosamine (UDP-ManNAc) to UDP-N-acetyl-D-mannosaminuronic acid (UDP-ManNAcA). The protein is UDP-N-acetyl-D-mannosamine dehydrogenase of Campylobacter jejuni.